The following is a 317-amino-acid chain: Probable cell division protein WhiA (317 aa).

Positions 281–314 (SLKELGQMLDPPVGKSGINHRLRRIEKIAEELRK) form a DNA-binding region, H-T-H motif.

This sequence belongs to the WhiA family.

Its function is as follows. Involved in cell division and chromosome segregation. This is Probable cell division protein WhiA from Clostridium novyi (strain NT).